A 223-amino-acid polypeptide reads, in one-letter code: Peroxynitrite isomerase 1 (223 aa).

A GXWXGXG motif is present at residues 69–75 (GVWRGEG). 2 residues coordinate heme b: lysine 186 and histidine 213.

The protein belongs to the nitrobindin family. As to quaternary structure, homodimer. Heme b serves as cofactor.

It carries out the reaction peroxynitrite = nitrate. It functions in the pathway nitrogen metabolism. Its function is as follows. Heme-binding protein able to scavenge peroxynitrite and to protect free L-tyrosine against peroxynitrite-mediated nitration, by acting as a peroxynitrite isomerase that converts peroxynitrite to nitrate. Therefore, this protein likely plays a role in peroxynitrite sensing and in the detoxification of reactive nitrogen and oxygen species (RNS and ROS, respectively). Is able to bind nitric oxide (NO) in vitro, but may act as a sensor of peroxynitrite levels in vivo. In Mycobacterium marinum (strain ATCC BAA-535 / M), this protein is Peroxynitrite isomerase 1.